The primary structure comprises 630 residues: 1-deoxy-D-xylulose-5-phosphate synthase (630 aa).

Residues His-72 and Gly-113–Ser-115 contribute to the thiamine diphosphate site. Residue Asp-144 participates in Mg(2+) binding. Residues Gly-145–Ala-146, Asn-173, Tyr-284, and Glu-367 each bind thiamine diphosphate. Asn-173 is a binding site for Mg(2+).

The protein belongs to the transketolase family. DXPS subfamily. In terms of assembly, homodimer. It depends on Mg(2+) as a cofactor. The cofactor is thiamine diphosphate.

It carries out the reaction D-glyceraldehyde 3-phosphate + pyruvate + H(+) = 1-deoxy-D-xylulose 5-phosphate + CO2. It participates in metabolic intermediate biosynthesis; 1-deoxy-D-xylulose 5-phosphate biosynthesis; 1-deoxy-D-xylulose 5-phosphate from D-glyceraldehyde 3-phosphate and pyruvate: step 1/1. Catalyzes the acyloin condensation reaction between C atoms 2 and 3 of pyruvate and glyceraldehyde 3-phosphate to yield 1-deoxy-D-xylulose-5-phosphate (DXP). This chain is 1-deoxy-D-xylulose-5-phosphate synthase, found in Geobacillus thermodenitrificans (strain NG80-2).